Here is a 128-residue protein sequence, read N- to C-terminus: MANDRRVSRVSSLIKREVSQMLLMEIKDDRVGAGMVSVTDVDLSHDLQHAKIFVSIYGNEDAKAETMAGLKASAGFVRRELGQRIRLRRTPEVVFLEDSSLERGDRMLHLLDHIKTDRPPEDDDSEEE.

The protein belongs to the RbfA family. Monomer. Binds 30S ribosomal subunits, but not 50S ribosomal subunits or 70S ribosomes.

Its subcellular location is the cytoplasm. Functionally, one of several proteins that assist in the late maturation steps of the functional core of the 30S ribosomal subunit. Associates with free 30S ribosomal subunits (but not with 30S subunits that are part of 70S ribosomes or polysomes). Required for efficient processing of 16S rRNA. May interact with the 5'-terminal helix region of 16S rRNA. The protein is Ribosome-binding factor A of Microcystis aeruginosa (strain NIES-843 / IAM M-2473).